The following is a 426-amino-acid chain: Tol-Pal system protein TolB (426 aa).

A signal peptide spans 1–25 (MSITPSLSRRTVMSLLAAGLSPAFA).

The protein belongs to the TolB family. The Tol-Pal system is composed of five core proteins: the inner membrane proteins TolA, TolQ and TolR, the periplasmic protein TolB and the outer membrane protein Pal. They form a network linking the inner and outer membranes and the peptidoglycan layer.

The protein resides in the periplasm. Its function is as follows. Part of the Tol-Pal system, which plays a role in outer membrane invagination during cell division and is important for maintaining outer membrane integrity. This Polaromonas sp. (strain JS666 / ATCC BAA-500) protein is Tol-Pal system protein TolB.